We begin with the raw amino-acid sequence, 1603 residues long: GATOR1 complex protein DEPDC5 (1603 aa).

Disordered regions lie at residues 427-450 (GKKP…KESE), 484-527 (VRER…SSLG), and 696-720 (LSNS…VSTS). The segment covering 430 to 439 (PASEKAKNGR) has biased composition (basic and acidic residues). Positions 494-508 (SASSCDVSSSPSLPS) are enriched in low complexity. Ser505 bears the Phosphoserine mark. Composition is skewed to polar residues over residues 518 to 527 (SQASDDSSLG) and 696 to 707 (LSNSGAGMNPRT). Ser1002 carries the phosphoserine; by PIM1 modification. The segment covering 1135–1153 (DRGNSQTFGNSQNIGEQGY) has biased composition (polar residues). Residues 1135 to 1165 (DRGNSQTFGNSQNIGEQGYSSTNSSDSSSQQ) form a disordered region. Residues 1154 to 1165 (SSTNSSDSSSQQ) are compositionally biased toward low complexity. In terms of domain architecture, DEP spans 1187 to 1262 (PSTGVQLLSE…YGFYFYKIVT (76 aa)). Ser1530 is modified (phosphoserine; by PKB/AKT1 and PIM1).

This sequence belongs to the IML1 family. Within the GATOR complex, component of the GATOR1 subcomplex, made of DEPDC5, NPRL2 and NPRL3. GATOR1 mediates the strong interaction of the GATOR complex with small GTPases Rag (RagA/RRAGA, RagB/RRAGB, RagC/RRAGC and/or RagD/RRAGD) heterodimers. Interacts with SAMTOR; interaction is direct and takes place in presence of methionine, leading to inhibit the activity of the GATOR1 complex. Phosphorylation at Ser-1002 and Ser-1530 by AKT1 and PIM1 inhibit the activity of DEPDC5, releasing inhibition of the mTORC1 pathway. In terms of processing, ubiquitinated. Amino acid-induced 'Lys-48'-linked polyubiquitination of DEPDC5 by the BCR(KLHL22) ubiquitin ligase complex leads to DEPDC5 proteasomal degradation and inhibition of the GATOR1 complex. Ubiquitination may occur at multiple lysines. In terms of tissue distribution, expressed in developing and adult brain.

The protein localises to the lysosome membrane. The protein resides in the cytoplasm. It localises to the cytosol. It is found in the perinuclear region. Its function is as follows. As a component of the GATOR1 complex functions as an inhibitor of the amino acid-sensing branch of the mTORC1 pathway. In response to amino acid depletion, the GATOR1 complex has GTPase activating protein (GAP) activity and strongly increases GTP hydrolysis by RagA/RRAGA (or RagB/RRAGB) within heterodimeric Rag complexes, thereby turning them into their inactive GDP-bound form, releasing mTORC1 from lysosomal surface and inhibiting mTORC1 signaling. In the presence of abundant amino acids, the GATOR1 complex is negatively regulated by GATOR2, the other GATOR subcomplex, in this amino acid-sensing branch of the TORC1 pathway. Within the GATOR1 complex, DEPDC5 mediates direct interaction with the nucleotide-binding pocket of small GTPases Rag (RagA/RRAGA, RagB/RRAGB, RagC/RRAGC and/or RagD/RRAGD) and coordinates their nucleotide loading states by promoting RagA/RRAGA or RagB/RRAGB into their GDP-binding state and RagC/RRAGC or RagD/RRAGD into their GTP-binding state. However, it does not execute the GAP activity, which is mediated by NPRL2. The chain is GATOR1 complex protein DEPDC5 from Homo sapiens (Human).